The chain runs to 482 residues: MVSKPFQRPFSLATRLTFFISLATIAAFFAFAWIMIHSVKVHFAEQDINDLKEISATLERVLNHPDETQARRLMTLEDIVSGYSNVLISLADSHGKTVYHSPGAPDIREFARDAIPDKDARGGEVFLLSGPTMMMPGHGHGHMEHSNWRMISLPVGPLVDGKPIYTLYIALSIDFHLHYINDLMNKLIMTASVISILIVFIVLLAVHKGHAPIRSVSRQIQNITSKDLDVRLDPQTVPIELEQLVLSFNHMIERIEDVFTRQSNFSADIAHEIRTPITNLITQTEIALSQSRSQKELEDVLYSNLEELTRMAKMVSDMLFLAQADNNQLIPEKKMLNLADEVGKVFDFFEALAEDRGVELQFVGDECQVAGDPLMLRRALSNLLSNALRYTPPGEAIVVRCQTVDHLVQVIVENPGTPIAPEHLPRLFDRFYRVDPSRQRKGEGSGIGLAIVKSIVVAHKGTVAVTSNARGTRFVIVLPERG.

The Cytoplasmic segment spans residues 1 to 15 (MVSKPFQRPFSLATR). A helical transmembrane segment spans residues 16–36 (LTFFISLATIAAFFAFAWIMI). Over 37–186 (HSVKVHFAEQ…LHYINDLMNK (150 aa)) the chain is Periplasmic. A helical membrane pass occupies residues 187-207 (LIMTASVISILIVFIVLLAVH). The HAMP domain occupies 207 to 260 (HKGHAPIRSVSRQIQNITSKDLDVRLDPQTVPIELEQLVLSFNHMIERIEDVFT). Over 208–482 (KGHAPIRSVS…RFVIVLPERG (275 aa)) the chain is Cytoplasmic. In terms of domain architecture, Histidine kinase spans 268 to 482 (DIAHEIRTPI…RFVIVLPERG (215 aa)). At H271 the chain carries Phosphohistidine; by autocatalysis.

In terms of processing, autophosphorylated.

The protein resides in the cell inner membrane. The enzyme catalyses ATP + protein L-histidine = ADP + protein N-phospho-L-histidine.. In terms of biological role, member of the two-component regulatory system CusS/CusR involved in response to copper and silver. Acts as a copper/silver ion sensor. Activates CusR by phosphorylation. This Escherichia coli O157:H7 protein is Sensor histidine kinase CusS (cusS).